Here is an 8081-residue protein sequence, read N- to C-terminus: Muscle M-line assembly protein unc-89 (8081 aa).

Residues 24-57 (DVNYSTHSSRSSYRSESLTSRTDGRGRSTSSEII) form a disordered region. Positions 28–54 (STHSSRSSYRSESLTSRTDGRGRSTSS) are enriched in low complexity. The SH3 domain occupies 63–127 (RSYPVYIAIQ…PGSYFETPTE (65 aa)). In terms of domain architecture, DH spans 152–330 (KRDQVYHELL…TTIPQRVHDL (179 aa)). Residues 342–498 (DTGKLGRIIR…WSGSRKSSLF (157 aa)) enclose the PH domain. The span at 479–495 (ASDQQSEFSEWSGSRKS) shows a compositional bias: polar residues. The tract at residues 479-531 (ASDQQSEFSEWSGSRKSSLFPGPEEGGPPRKKVKSPPVISPTGSSTSIYSGGS) is disordered. A compositionally biased stretch (low complexity) spans 518–531 (SPTGSSTSIYSGGS). 6 Ig-like C2-type domains span residues 547–633 (GTRV…ASTS), 648–736 (PAFV…AELF), 748–838 (PEFQ…LKVR), 946–1033 (PTFL…ARLV), 1044–1132 (PKFV…AKLT), and 1140–1227 (PEFD…NTLG). A disulfide bridge links Cys-568 with Cys-621. Composition is skewed to low complexity over residues 1283 to 1303 (STKT…GVTV) and 1326 to 1335 (EGSISVSKIE). A disordered region spans residues 1283 to 1892 (STKTTTMSTT…PAPKLTRDLK (610 aa)). 6 stretches are compositionally biased toward basic and acidic residues: residues 1336-1351 (VVSK…EGTP), 1361-1446 (ELPK…KEKS), 1453-1490 (KTGD…EKSP), 1515-1585 (MTHE…KSPE), 1592-1832 (KKSE…KEKS), and 1839-1857 (KTGD…EKPK). RCSD domains follow at residues 1375 to 1475 (KSPS…KSPE), 1479 to 1585 (DVKS…KSPE), 1597 to 1695 (EVKS…KSPQ), and 1700 to 1799 (KPAS…KSPE). A compositionally biased stretch (pro residues) spans 1858–1868 (SPTPKKSPPGS). Residues 1875-1892 (KSPEAEKPPAPKLTRDLK) are compositionally biased toward basic and acidic residues. 41 Ig-like C2-type domains span residues 1982-2067 (PEFT…AQLT), 2071-2163 (PSTT…ADLK), 2171-2261 (PKFK…AKVT), 2269-2359 (PEFV…AQLK), 2367-2455 (PKFT…VQLA), 2463-2564 (PTFA…AKPA), 2563-2651 (PAFQ…GPLK), 2657-2746 (PVEF…ATLL), 2754-2858 (PDFL…SEAQ), 2887-2980 (PKFI…ATLT), 2994-3081 (PEFI…AFLT), 3087-3183 (PVFT…SKIT), 3189-3280 (PVFE…AEVT), 3286-3376 (PTFV…ANFA), 3384-3469 (PEFV…EALT), 3482-3572 (PEFT…ANMA), 3580-3667 (PLFV…ETVG), 3686-3777 (PLFI…LKIQ), 3817-3908 (PEFV…IIVT), 3920-4009 (PDFL…VTLT), 4018-4106 (PGFF…VPLT), 4109-4201 (PSET…ATVT), 4212-4297 (PSFK…AKVN), 4302-4387 (PEIV…AALT), 4400-4485 (PEIV…AALT), 4489-4580 (PGIA…CALT), 4588-4678 (PKII…GKIT), 4681-4771 (PKIT…AQLT), 4873-4961 (PEIV…AALT), 4965-5057 (PNVL…GSVV), 5067-5160 (PTSG…CKVT), 5171-5260 (PKFV…CEFQ), 5277-5366 (PRFN…ATYQ), 5383-5472 (PKIN…CSVN), 5487-5578 (PFFT…AHVQ), 5595-5685 (PKFI…SFVR), 5701-5790 (PRFT…GTAT), 5815-5904 (PKLM…CDVN), 5925-6014 (PGFT…AELV), 6038-6130 (PRIR…GSLN), and 6150-6239 (PGFV…AVLD). A disulfide bridge links Cys-2582 with Cys-2635. Cystine bridges form between Cys-2908/Cys-2964 and Cys-3015/Cys-3065. 2 cysteine pairs are disulfide-bonded: Cys-3707/Cys-3759 and Cys-3838/Cys-3890. The tract at residues 4525–4553 (KNGKEITPSDKAQPGSDGDNKPQLVIPDA) is disordered. Cystine bridges form between Cys-5298–Cys-5350, Cys-5404–Cys-5456, Cys-5508–Cys-5560, and Cys-5616–Cys-5669. Disulfide bonds link Cys-5836–Cys-5888 and Cys-5946–Cys-5998. Residues 6278-6374 (PDRGPFIKEV…SPPSRLMAPP (97 aa)) enclose the Fibronectin type-III 1 domain. 2 consecutive Ig-like C2-type domains span residues 6413–6502 (PGVV…IMVD) and 6507–6596 (PNFI…CTVT). Residues 6592-6878 (SCTVTVEAEG…VDEALDHPWI (287 aa)) enclose the Protein kinase 1 domain. 5 disordered regions span residues 6954–7130 (KKPP…QQKI), 7177–7217 (QVEA…PQPQ), 7284–7311 (PAIN…LSPR), 7324–7343 (RGKP…DDED), and 7348–7372 (DRKK…ERLE). The segment covering 6999-7009 (RQPPQIPPQPQ) has biased composition (pro residues). Basic and acidic residues predominate over residues 7087–7110 (LEKRKLIPQDKGETPSHSKKEKTQ). Residues 7200–7215 (KPTPSPTSPQKSPVPQ) show a composition bias toward pro residues. Positions 7284 to 7302 (PAINLSPNPKSPRRSTPGT) are enriched in polar residues. In terms of domain architecture, Ig-like C2-type 50 spans 7528-7617 (PIFTARLRDV…TDKSSCRLIS (90 aa)). Cysteines 7549 and 7600 form a disulfide. The region spanning 7623–7721 (RPGRPEAELS…SSRIVQTHGK (99 aa)) is the Fibronectin type-III 2 domain. A disordered region spans residues 7746–7773 (STNQLGGISEESEEDSEARTANEDMKSN). Residues 7762–7771 (EARTANEDMK) show a composition bias toward basic and acidic residues. The 251-residue stretch at 7785 to 8035 (FQIGGLKFKG…TDEALSHKFL (251 aa)) folds into the Protein kinase 2 domain.

The protein belongs to the protein kinase superfamily. CAMK Ser/Thr protein kinase family. In terms of assembly, may interact (via fibronectin type-III domain 1, Ig-like C2-type domain 48/49 and protein kinase domain 1 or C-terminus of the interkinase region) with lim-9 (via LIM zinc-binding domain). May interact (via fibronectin type-III domain 1, Ig-like C2-type domain 48/49 and kinase protein domain 1 or Ig-like C2-type domain 50, fibronectin type-III domain 2 and kinase protein domain 2) with scpl-1 isoforms a and b (via FCP1 homology domain); the interaction may act as a molecular bridge to bring two unc-89 molecules together or to stabilize a loop between the 2 kinase domains. May interact (via SH3 domain) with unc-15. May interact (via Ig-like C2-type domain 1-3) with cpna-1 (via VWFA domain). May interact (via Ig-like C2-type domain 2/3 and, Ig-like C2-type domain 50 and fibronectin type-III domain 2) with mel-26 (via MATH domain). May interact (via DH and PH domains) with rho-1, ced-10, mig-2 and cdc-42. Expressed in body-wall, pharyngeal muscles and a few muscle cells of the tail (at protein level). Expressed in gonadal myoepithelial sheath cells (at protein level). Isoform c: Expressed in body wall and vulval muscles but not in pharyngeal muscles. Isoform d: Specifically expressed in vulval, intestinal, anal depressor and anal sphincter muscles.

It localises to the cytoplasm. It is found in the myofibril. The protein resides in the sarcomere. Its subcellular location is the m line. Functionally, structural component of the muscle M line which is involved in assembly and organization of sarcomere myofilaments. The large isoform a, isoform b, isoform d and isoform f play an essential role in maintaining the organization of sarcomeres but not myofilament alignment during body wall muscle development whereas the small isoform c and isoform d appear to have a minor role. Isoform b and isoform f are required for the organization of unc-15/paramyosin into sarcomere thick filaments in body wall muscles. By binding mel-26, a substrate adapter of the cul-3 E3 ubiquitin-protein ligase complex, regulates the organization of myosin thick filaments, likely by preventing the degradation of microtubule severing protein mei-1. Acts as a guanine nucleotide exchange factor (GEF) for Rho GTPase rho-1 but not ced-10, mig-2 and cdc-42. The large isoforms regulate Ca(2+) signaling during muscle contraction by ensuring the correct localization of sarco-endoplamic reticulum Ca(2+) ATPase sca-1 and ryanodine receptor unc-68. By controlling the contraction and/or organization of pharyngeal muscles, plays a role in the formation of pharyngeal gland cell extension. This Caenorhabditis elegans protein is Muscle M-line assembly protein unc-89 (unc-89).